The following is a 198-amino-acid chain: Recombination protein RecR (198 aa).

The C4-type zinc-finger motif lies at Cys-56–Cys-71. The 96-residue stretch at Gly-79 to Pro-174 folds into the Toprim domain.

The protein belongs to the RecR family.

May play a role in DNA repair. It seems to be involved in an RecBC-independent recombinational process of DNA repair. It may act with RecF and RecO. The sequence is that of Recombination protein RecR from Tropheryma whipplei (strain TW08/27) (Whipple's bacillus).